A 291-amino-acid polypeptide reads, in one-letter code: 4-hydroxy-tetrahydrodipicolinate synthase (291 aa).

Position 45 (threonine 45) interacts with pyruvate. Catalysis depends on tyrosine 131, which acts as the Proton donor/acceptor. Lysine 159 serves as the catalytic Schiff-base intermediate with substrate. Residue isoleucine 202 coordinates pyruvate.

This sequence belongs to the DapA family. As to quaternary structure, homotetramer; dimer of dimers.

It is found in the cytoplasm. It catalyses the reaction L-aspartate 4-semialdehyde + pyruvate = (2S,4S)-4-hydroxy-2,3,4,5-tetrahydrodipicolinate + H2O + H(+). The protein operates within amino-acid biosynthesis; L-lysine biosynthesis via DAP pathway; (S)-tetrahydrodipicolinate from L-aspartate: step 3/4. In terms of biological role, catalyzes the condensation of (S)-aspartate-beta-semialdehyde [(S)-ASA] and pyruvate to 4-hydroxy-tetrahydrodipicolinate (HTPA). In Methanosarcina mazei (strain ATCC BAA-159 / DSM 3647 / Goe1 / Go1 / JCM 11833 / OCM 88) (Methanosarcina frisia), this protein is 4-hydroxy-tetrahydrodipicolinate synthase.